A 539-amino-acid chain; its full sequence is Glycerophosphoinositol inositolphosphodiesterase GDPD2 (539 aa).

Residues 1 to 38 (MAESPGCCSVWARCLHCLYSCHWRKCPRERMQTSKCDC) are Cytoplasmic-facing. A helical transmembrane segment spans residues 39–59 (IWFGLLFLTFLLSLSWLYIGL). Over 60–85 (VLLNDLHNFNEFLFRRWGHWMDWSLA) the chain is Extracellular. Residues 86 to 106 (FLLVISLLVTYASLLLVLALL) traverse the membrane as a helical segment. Topologically, residues 107–121 (LRLCRQPLHLHSLHK) are cytoplasmic. The chain crosses the membrane as a helical span at residues 122–142 (VLLLLIMLLVAAGLVGLDIQW). The Extracellular portion of the chain corresponds to 143 to 154 (QQEWHSLRVSLQ). Residues 155-175 (ATAPFLHIGAAAGIALLAWPV) form a helical membrane-spanning segment. The Cytoplasmic segment spans residues 176–188 (ADTFYRIHRRGPK). Residues 189 to 209 (ILLLLLFFGVVLVIYLAPLCI) form a helical membrane-spanning segment. The Extracellular portion of the chain corresponds to 210–490 (SSPCIMEPRD…PIWLITPQTY (281 aa)). The region spanning 224-479 (PGLVGHRGAP…NDCQLLQQMR (256 aa)) is the GP-PDE domain. 3 residues coordinate a divalent metal cation: Glu256, Asp258, and His271. Asn442 carries an N-linked (GlcNAc...) asparagine glycan. The chain crosses the membrane as a helical span at residues 491 to 511 (LIIWVITNCVSTMLLLWTFLL). The Cytoplasmic segment spans residues 512-539 (QRRFVKKRGKTGLETAVLLTRINNFMME).

It belongs to the glycerophosphoryl diester phosphodiesterase family. Ca(2+) serves as cofactor.

The protein resides in the cell membrane. Its subcellular location is the cytoplasm. The protein localises to the cytoskeleton. It carries out the reaction sn-glycero-3-phospho-1D-myo-inositol + H2O = 1D-myo-inositol 1-phosphate + glycerol + H(+). Its function is as follows. Has glycerophosphoinositol inositolphosphodiesterase activity and specifically hydrolyzes glycerophosphoinositol, with no activity for other substrates such as glycerophosphoinositol 4-phosphate, glycerophosphocholine, glycerophosphoethanolamine, and glycerophosphoserine. Accelerates the program of osteoblast differentiation and growth. May play a role in remodeling of the actin cytoskeleton. This is Glycerophosphoinositol inositolphosphodiesterase GDPD2 (GDPD2) from Homo sapiens (Human).